A 125-amino-acid chain; its full sequence is Phosphoribosyl-AMP cyclohydrolase (125 aa).

Asp-80 contributes to the Mg(2+) binding site. Zn(2+) is bound at residue Cys-81. Positions 82 and 84 each coordinate Mg(2+). Residues Cys-97 and Cys-104 each contribute to the Zn(2+) site.

Belongs to the PRA-CH family. As to quaternary structure, homodimer. It depends on Mg(2+) as a cofactor. Zn(2+) serves as cofactor.

Its subcellular location is the cytoplasm. It catalyses the reaction 1-(5-phospho-beta-D-ribosyl)-5'-AMP + H2O = 1-(5-phospho-beta-D-ribosyl)-5-[(5-phospho-beta-D-ribosylamino)methylideneamino]imidazole-4-carboxamide. The protein operates within amino-acid biosynthesis; L-histidine biosynthesis; L-histidine from 5-phospho-alpha-D-ribose 1-diphosphate: step 3/9. In terms of biological role, catalyzes the hydrolysis of the adenine ring of phosphoribosyl-AMP. This is Phosphoribosyl-AMP cyclohydrolase from Leifsonia xyli subsp. xyli (strain CTCB07).